Consider the following 141-residue polypeptide: Nucleoside diphosphate kinase (141 aa).

Residues Lys-11, Phe-59, Arg-87, Thr-93, Arg-104, and Asn-114 each coordinate ATP. The active-site Pros-phosphohistidine intermediate is His-117.

Belongs to the NDK family. Homotetramer. The cofactor is Mg(2+).

The protein resides in the cytoplasm. It catalyses the reaction a 2'-deoxyribonucleoside 5'-diphosphate + ATP = a 2'-deoxyribonucleoside 5'-triphosphate + ADP. It carries out the reaction a ribonucleoside 5'-diphosphate + ATP = a ribonucleoside 5'-triphosphate + ADP. Functionally, major role in the synthesis of nucleoside triphosphates other than ATP. The ATP gamma phosphate is transferred to the NDP beta phosphate via a ping-pong mechanism, using a phosphorylated active-site intermediate. This Pseudomonas putida (strain GB-1) protein is Nucleoside diphosphate kinase.